Here is a 218-residue protein sequence, read N- to C-terminus: Adenylate kinase (218 aa).

10–15 (GAGKGT) contributes to the ATP binding site. The segment at 30–59 (STGDMLRAAVKEGSELGLKVKEIMNSGGLV) is NMP. Residues Thr31, Arg36, 57-59 (GLV), 85-88 (GFPR), and Gln92 contribute to the AMP site. An LID region spans residues 122–159 (GRRVHPGSGRVYHVDYNPPKEEGKDDVTGEALIQRDDD). Residues Arg123 and 132–133 (VY) each bind ATP. The AMP site is built by Arg156 and Arg167. Residue Gly203 coordinates ATP.

Belongs to the adenylate kinase family. In terms of assembly, monomer.

The protein localises to the cytoplasm. The enzyme catalyses AMP + ATP = 2 ADP. Its pathway is purine metabolism; AMP biosynthesis via salvage pathway; AMP from ADP: step 1/1. Its function is as follows. Catalyzes the reversible transfer of the terminal phosphate group between ATP and AMP. Plays an important role in cellular energy homeostasis and in adenine nucleotide metabolism. This Chromohalobacter salexigens (strain ATCC BAA-138 / DSM 3043 / CIP 106854 / NCIMB 13768 / 1H11) protein is Adenylate kinase.